A 153-amino-acid chain; its full sequence is Transcriptional regulator MraZ (153 aa).

2 SpoVT-AbrB domains span residues 7–61 (KEKH…LPDV) and 90–133 (LEMV…EPGR).

This sequence belongs to the MraZ family. As to quaternary structure, forms oligomers.

The protein localises to the cytoplasm. The protein resides in the nucleoid. The protein is Transcriptional regulator MraZ of Chlorobium luteolum (strain DSM 273 / BCRC 81028 / 2530) (Pelodictyon luteolum).